A 268-amino-acid polypeptide reads, in one-letter code: Octanoyltransferase (268 aa).

Residues 47 to 243 (PETPDQVWLV…ALCEVLAAHE (197 aa)) enclose the BPL/LPL catalytic domain. Residues 87–94 (RGGQITYH), 159–161 (ALG), and 172–174 (GVS) contribute to the substrate site. Cysteine 190 acts as the Acyl-thioester intermediate in catalysis.

Belongs to the LipB family.

It is found in the cytoplasm. It carries out the reaction octanoyl-[ACP] + L-lysyl-[protein] = N(6)-octanoyl-L-lysyl-[protein] + holo-[ACP] + H(+). It participates in protein modification; protein lipoylation via endogenous pathway; protein N(6)-(lipoyl)lysine from octanoyl-[acyl-carrier-protein]: step 1/2. Functionally, catalyzes the transfer of endogenously produced octanoic acid from octanoyl-acyl-carrier-protein onto the lipoyl domains of lipoate-dependent enzymes. Lipoyl-ACP can also act as a substrate although octanoyl-ACP is likely to be the physiological substrate. In Cupriavidus necator (strain ATCC 17699 / DSM 428 / KCTC 22496 / NCIMB 10442 / H16 / Stanier 337) (Ralstonia eutropha), this protein is Octanoyltransferase.